A 395-amino-acid polypeptide reads, in one-letter code: Protein maternal effect lethal 26 (395 aa).

The region spanning 41 to 162 (KVQHTWTVKN…RDMIIVNVEI (122 aa)) is the MATH domain. One can recognise a BTB domain in the interval 201–269 (CDFAINVNGK…IYCGRCNKDI (69 aa)).

Interacts (via BTB domain) with cul-3. Seems to be a component of a E3 ubiquitin-protein ligase complex containing cul-3. Interacts (probably via MATH domain) with mei-1, which targets mei-1 for ubiquitin-mediated proteolysis. Interacts (probably via MATH domain) with ppfr-1, the regulatory subunit of the PP4 complex; targets ppfr-1 for ubiquitin-mediated proteolysis. May interact (via MATH domain) with unc-89 (via Ig-like C2-type domain 2/3 and, Ig-like C2-type domain 50 and fibronectin type-III domain 2). Expressed in body wall muscles.

The protein localises to the cytoplasm. The protein resides in the myofibril. Its subcellular location is the sarcomere. It is found in the m line. It localises to the i band. The protein operates within protein modification; protein ubiquitination. Its function is as follows. Probable substrate-specific adapter of an E3 ubiquitin-protein ligase complex which mediates the ubiquitination and subsequent proteasomal degradation of target proteins. Controls degradation of microtubule severing protein mei-1 after meiosis. Controls degradation of ppfr-1, the regulatory subunit of PP4 complex, after meiosis. In body wall muscles, involved in the organization of myosin thick filaments, likely by regulating the degradation of mei-1 downstream of unc-89. May also activate the TORC1 pathway. The sequence is that of Protein maternal effect lethal 26 (mel-26) from Caenorhabditis elegans.